Reading from the N-terminus, the 476-residue chain is Beta-amyrin 28-monooxygenase (476 aa).

A helical transmembrane segment spans residues 2-22 (ELLYVCLVCVFVFLVSLLLLY). C421 contributes to the heme binding site.

Belongs to the cytochrome P450 family. It depends on heme as a cofactor. As to expression, specifically expressed in roots.

It is found in the membrane. It carries out the reaction beta-amyrin + 3 reduced [NADPH--hemoprotein reductase] + 3 O2 = oleanolate + 3 oxidized [NADPH--hemoprotein reductase] + 4 H2O + 4 H(+). In terms of biological role, catalyzes the carboxylation of beta-amyrin at the C-28 position to form oleanolate. Catalyzes the carboxylation of alpha-amyrin at the C-28 position to form ursolate. The sequence is that of Beta-amyrin 28-monooxygenase (CYP716A44) from Solanum lycopersicum (Tomato).